A 267-amino-acid chain; its full sequence is Trehalose-phosphate phosphatase (267 aa).

The active-site Nucleophile is D20. Residues D20, D22, and D198 each coordinate Mg(2+). 20 to 22 (DLD) is a binding site for substrate.

It belongs to the trehalose phosphatase family. Mg(2+) is required as a cofactor.

The catalysed reaction is alpha,alpha-trehalose 6-phosphate + H2O = alpha,alpha-trehalose + phosphate. It functions in the pathway glycan biosynthesis; trehalose biosynthesis. In terms of biological role, removes the phosphate from trehalose 6-phosphate to produce free trehalose. In Salmonella typhimurium (strain SL1344), this protein is Trehalose-phosphate phosphatase (otsB).